An 82-amino-acid polypeptide reads, in one-letter code: DNA-directed RNA polymerase subunit Rpo5 (82 aa).

The protein belongs to the archaeal Rpo5/eukaryotic RPB5 RNA polymerase subunit family. As to quaternary structure, part of the RNA polymerase complex.

The protein resides in the cytoplasm. It carries out the reaction RNA(n) + a ribonucleoside 5'-triphosphate = RNA(n+1) + diphosphate. In terms of biological role, DNA-dependent RNA polymerase (RNAP) catalyzes the transcription of DNA into RNA using the four ribonucleoside triphosphates as substrates. The protein is DNA-directed RNA polymerase subunit Rpo5 of Thermococcus onnurineus (strain NA1).